A 340-amino-acid polypeptide reads, in one-letter code: Mitochondrial import receptor subunit TOM40 homolog 2 (340 aa).

The tract at residues 1–37 (MGNVMASTADAESSRGRGHLSAGLRLPEAPQYSGGVP) is disordered.

Belongs to the Tom40 family. As to quaternary structure, forms part of the preprotein translocase of the outer mitochondrial membrane (TOM complex). Interacts with mitochondrial targeting sequences. As to expression, only expressed in the male germline, detected in primary spermatocytes as well as post-meiotic stages. Not detected in stem cells and spermatogonia near the tip of the testis.

The protein resides in the mitochondrion outer membrane. Functionally, channel-forming protein essential for import of protein precursors into mitochondria. The sequence is that of Mitochondrial import receptor subunit TOM40 homolog 2 from Drosophila melanogaster (Fruit fly).